The following is a 528-amino-acid chain: Phosphoenolpyruvate carboxykinase (ATP) (528 aa).

Substrate-binding residues include Arg-56, Tyr-192, and Lys-198. ATP-binding positions include Lys-198, His-217, and 233–241 (GLSGTGKTT). Mn(2+)-binding residues include Lys-198 and His-217. Residue Asp-254 participates in Mn(2+) binding. Glu-282, Arg-319, and Thr-444 together coordinate ATP. Substrate is bound at residue Arg-319.

It belongs to the phosphoenolpyruvate carboxykinase (ATP) family. Mn(2+) is required as a cofactor.

The protein localises to the cytoplasm. The catalysed reaction is oxaloacetate + ATP = phosphoenolpyruvate + ADP + CO2. It participates in carbohydrate biosynthesis; gluconeogenesis. Its function is as follows. Involved in the gluconeogenesis. Catalyzes the conversion of oxaloacetate (OAA) to phosphoenolpyruvate (PEP) through direct phosphoryl transfer between the nucleoside triphosphate and OAA. This Geobacillus thermodenitrificans (strain NG80-2) protein is Phosphoenolpyruvate carboxykinase (ATP).